The following is a 451-amino-acid chain: C4-dicarboxylate transport protein (451 aa).

9 consecutive transmembrane segments (helical) span residues 17-37 (SLYV…HFYP), 53-73 (LIKM…IAGM), 85-105 (LALL…LIVV), 153-173 (AFAK…GFAL), 193-213 (VLFT…FGAM), 231-251 (LMGS…GLIA), 306-326 (GYSF…VFIA), 339-359 (ITLL…TGSG), and 361-381 (IVLA…LALI).

This sequence belongs to the dicarboxylate/amino acid:cation symporter (DAACS) (TC 2.A.23) family.

The protein resides in the cell inner membrane. Functionally, responsible for the transport of dicarboxylates such as succinate, fumarate, and malate from the periplasm across the membrane. The sequence is that of C4-dicarboxylate transport protein from Paracidovorax citrulli (strain AAC00-1) (Acidovorax citrulli).